The chain runs to 467 residues: MTLKSNKNEPALILDSVTSVRTALSDLYLEQLLQNKPTDKQAAMQTYENKGAEVFSNGSAGHINGAELSRMREVAFEKNQSEPLGVTLKLNDKQRCSVARILHGGMIHRQGSLHEGDEIAEINGKSVANQTVDQLQKILKETNGVVTMKIIPRPQSRSKPCEMYMRGQFDYDPAMDDLIPCKEAGLKFQTGDIIQIINKQDPNWWQGRVENNAANFAGLIPSPELQEWRAASKSKAREGSQSCSPFGKKKKCKDKYLAKHSSIFDQLDVISYEEVVRLPAFKRKTLVLIGAPGVGRRHIKNVLLTKYPEKFSYPVPHTTRPQRKGDANGEEYFFISNEAMTKCISANELLEYGSFQGYMFGTITETIQKIHEQDKIALLDVEPQTMKVLRTADFGPLMVFIAPTDTAAQTENLQMIQKESETILNTYRQYFDVVLVNNDVNESVKIVEEALEHATTTPQWVPVSWVY.

Residues 73-154 (EVAFEKNQSE…VVTMKIIPRP (82 aa)) form the PDZ domain. The SH3 domain maps to 160–230 (PCEMYMRGQF…PSPELQEWRA (71 aa)). The region spanning 283–452 (RKTLVLIGAP…SVKIVEEALE (170 aa)) is the Guanylate kinase-like domain.

The protein belongs to the MAGUK family. Post-translationally, extensively palmitoylated.

Its subcellular location is the membrane. May play a role in the regulation of neutrophil polarization. In Takifugu rubripes (Japanese pufferfish), this protein is 55 kDa erythrocyte membrane protein (mpp1).